The chain runs to 310 residues: tRNA-cytidine(32) 2-sulfurtransferase (310 aa).

Positions 45 to 50 (SGGKDS) match the PP-loop motif motif. [4Fe-4S] cluster is bound by residues Cys120, Cys123, and Cys211.

This sequence belongs to the TtcA family. In terms of assembly, homodimer. Requires Mg(2+) as cofactor. It depends on [4Fe-4S] cluster as a cofactor.

The protein resides in the cytoplasm. It carries out the reaction cytidine(32) in tRNA + S-sulfanyl-L-cysteinyl-[cysteine desulfurase] + AH2 + ATP = 2-thiocytidine(32) in tRNA + L-cysteinyl-[cysteine desulfurase] + A + AMP + diphosphate + H(+). It functions in the pathway tRNA modification. Catalyzes the ATP-dependent 2-thiolation of cytidine in position 32 of tRNA, to form 2-thiocytidine (s(2)C32). The sulfur atoms are provided by the cysteine/cysteine desulfurase (IscS) system. The sequence is that of tRNA-cytidine(32) 2-sulfurtransferase from Shewanella sp. (strain ANA-3).